The chain runs to 335 residues: Cytoskeleton protein RodZ (335 aa).

Topologically, residues 1–111 are cytoplasmic; it reads MNTEATHDQN…LGKRRKKRDG (111 aa). In terms of domain architecture, HTH cro/C1-type spans 19–71; it reads LRNAREQLGLSQQAVAERLCLKVSTVRDIEEDKAPADLASTFLRGYIRSYARL. Residues 30–49 constitute a DNA-binding region (H-T-H motif); that stretch reads QQAVAERLCLKVSTVRDIEE. A helical; Signal-anchor for type II membrane protein transmembrane segment spans residues 112–132; sequence WLMTFTWLVLFVVIGLSGAWW. At 133 to 335 the chain is on the periplasmic side; sequence WQDHKAQQEE…TLNAEQSPAQ (203 aa). The segment covering 148–164 has biased composition (polar residues); it reads DQSSAELNNNQSQSVPL. Residues 148–239 are disordered; it reads DQSSAELNNN…PDGAAPLPTD (92 aa). Composition is skewed to low complexity over residues 165–205 and 217–239; these read DTST…DPQQ and DTAA…LPTD.

This sequence belongs to the RodZ family.

It localises to the cell inner membrane. In terms of biological role, cytoskeletal protein that is involved in cell-shape control through regulation of the length of the long axis. The chain is Cytoskeleton protein RodZ from Escherichia coli O6:K15:H31 (strain 536 / UPEC).